The following is a 179-amino-acid chain: X-linked lymphocyte-regulated protein 5C (179 aa).

Positions 1-11 (MSNKEQKDMKK) are enriched in basic and acidic residues. The segment at 1–75 (MSNKEQKDMK…MQDFKGDDGT (75 aa)) is disordered. Residues 42 to 53 (GTSGMGSHSSGS) are compositionally biased toward low complexity. A compositionally biased stretch (basic and acidic residues) spans 56–75 (QEAREPVQKKMQDFKGDDGT). Positions 146-175 (ITQQQMKILQTAIEDHETKLKNAKDMCDTF) form a coiled coil.

Belongs to the XLR/SYCP3 family. As to expression, expressed in testis (at protein level). Also expressed in ovary. Not detected in other tissues tested.

The protein localises to the nucleus. It is found in the chromosome. This Mus musculus (Mouse) protein is X-linked lymphocyte-regulated protein 5C.